Here is a 116-residue protein sequence, read N- to C-terminus: MMEIMLKAKIHMATVTEKEIEYEGSIGIDEELLELSGIKINEMVLISDVNNGNRFITYVIPEPRGSRKISLNGAAARLVEKGDKIIIMAFGLYSKDEYKSPKILIMNSDNTVKEIR.

Ser25 (schiff-base intermediate with substrate; via pyruvic acid) is an active-site residue. The residue at position 25 (Ser25) is a Pyruvic acid (Ser). Thr57 serves as a coordination point for substrate. Tyr58 serves as the catalytic Proton donor. 73 to 75 contacts substrate; that stretch reads GAA.

It belongs to the PanD family. In terms of assembly, heterooctamer of four alpha and four beta subunits. It depends on pyruvate as a cofactor. In terms of processing, is synthesized initially as an inactive proenzyme, which is activated by self-cleavage at a specific serine bond to produce a beta-subunit with a hydroxyl group at its C-terminus and an alpha-subunit with a pyruvoyl group at its N-terminus.

The protein localises to the cytoplasm. It carries out the reaction L-aspartate + H(+) = beta-alanine + CO2. The protein operates within cofactor biosynthesis; (R)-pantothenate biosynthesis; beta-alanine from L-aspartate: step 1/1. Functionally, catalyzes the pyruvoyl-dependent decarboxylation of aspartate to produce beta-alanine. This chain is Aspartate 1-decarboxylase, found in Fervidobacterium nodosum (strain ATCC 35602 / DSM 5306 / Rt17-B1).